Reading from the N-terminus, the 266-residue chain is Phosphatidylglycerol--prolipoprotein diacylglyceryl transferase (266 aa).

Helical transmembrane passes span 10–30 (VALA…LIGI), 56–76 (LVFW…VLFY), 92–112 (WKGG…VWWF), 120–140 (FFQL…AGRI), 171–191 (PSQL…LWLF), 199–219 (ASVS…VEFV), and 233–253 (WLTM…ALMV). Arg-139 is a binding site for a 1,2-diacyl-sn-glycero-3-phospho-(1'-sn-glycerol).

Belongs to the Lgt family.

The protein resides in the cell inner membrane. The enzyme catalyses L-cysteinyl-[prolipoprotein] + a 1,2-diacyl-sn-glycero-3-phospho-(1'-sn-glycerol) = an S-1,2-diacyl-sn-glyceryl-L-cysteinyl-[prolipoprotein] + sn-glycerol 1-phosphate + H(+). It functions in the pathway protein modification; lipoprotein biosynthesis (diacylglyceryl transfer). Functionally, catalyzes the transfer of the diacylglyceryl group from phosphatidylglycerol to the sulfhydryl group of the N-terminal cysteine of a prolipoprotein, the first step in the formation of mature lipoproteins. In Pseudomonas paraeruginosa (strain DSM 24068 / PA7) (Pseudomonas aeruginosa (strain PA7)), this protein is Phosphatidylglycerol--prolipoprotein diacylglyceryl transferase.